Here is a 502-residue protein sequence, read N- to C-terminus: Reduced meiotic recombination protein C1442.04c (502 aa).

Ser-328, Ser-330, and Ser-331 each carry phosphoserine. Disordered stretches follow at residues Asn-353 to Asn-391, Gly-420 to Asp-440, and Glu-454 to Asp-502. Residues Asp-367–Asp-378 are compositionally biased toward acidic residues. Polar residues-rich tracts occupy residues Gly-420–Gly-436 and Gly-462–Thr-477.

The protein belongs to the RMR1 family.

The protein resides in the cytoplasm. It is found in the nucleus. Required for normal levels of gene conversion events during meiosis. The protein is Reduced meiotic recombination protein C1442.04c of Schizosaccharomyces pombe (strain 972 / ATCC 24843) (Fission yeast).